Reading from the N-terminus, the 1241-residue chain is Anion exchange protein 2 (1241 aa).

A disordered region spans residues 1-240; sequence MSSAPRRPAK…RSYNLQERRR (240 aa). Over 1–707 the chain is Cytoplasmic; that stretch reads MSSAPRRPAK…SDFRDALDPQ (707 aa). Basic and acidic residues-rich tracts occupy residues 37–49 and 58–75; these read ELHRTLGVERFEE and GGEEPGRSYGEEDFEYHR. Basic residues-rich tracts occupy residues 76 to 85 and 94 to 110; these read QSSHHIHHPL and RRRKTPQGPGRKPRRRP. 6 positions are modified to phosphoserine: Ser113, Ser132, Ser144, Ser170, Ser172, and Ser173. The segment covering 120–133 has biased composition (acidic residues); it reads TIEEGEEDEDEASE. Residues 141 to 155 show a composition bias toward low complexity; that stretch reads TQPSPVSTPSSVQFF. Thr183 carries the phosphothreonine modification. Over residues 189–209 the composition is skewed to low complexity; it reads GAQAGTQVEEAEAEAVAVASG. Gly residues predominate over residues 210 to 219; that stretch reads TAGGDDGGAS. At Ser243 the chain carries Phosphoserine. Thr257 is modified (phosphothreonine). Residue Lys274 is modified to N6-methyllysine. The interval 288 to 320 is disordered; the sequence is LVRKNAKGSTQSGREGREPGPTPRARPRAPHKP. Ser443 is modified (phosphoserine). The segment at 449 to 471 is disordered; sequence SLLGHHHGQGAESDPHVTEPLMG. The next 4 helical transmembrane spans lie at 708 to 731, 737 to 774, 784 to 816, and 826 to 847; these read CLAAVIFIYFAALSPAITFGGLLG, LIGVSELIMSTALQGVVFCLLGAQPLLVIGFSGPLLVF, SNHLEYLVGRVWIGFWLVFLALLMVALEGSFLV, and IFAFLISLIFIYETFYKLVKIF. A membrane (anion exchange) region spans residues 708–1241; that stretch reads CLAAVIFIYF…DEYNEMPMPV (534 aa). Residues 848 to 900 are Extracellular-facing; sequence QEHPLHGCSASNSSEVDGGENMTWAGARPTLGPGNRSLAGQSGQGKPRGQPNT. N-linked (GlcNAc...) asparagine glycosylation is found at Asn859, Asn868, and Asn882. A helical membrane pass occupies residues 901-918; the sequence is ALLSLVLMAGTFFIAFFL. Topologically, residues 919-933 are cytoplasmic; it reads RKFKNSRFFPGRIRR. 5 consecutive transmembrane segments (helical) span residues 934 to 954, 988 to 1010, 1036 to 1059, 1091 to 1136, and 1163 to 1199; these read VIGDFGVPIAILIMVLVDYSI, PFPVWMMVASLLPAILVFILIFM, LLLIVAMGGICALFGLPWLAAATV, VTGL…IQFY, and MHLFTALQLLCLALLWAVMSTAASLAFPFILILTVPL. Residue Cys1173 is the site of S-palmitoyl cysteine attachment.

This sequence belongs to the anion exchanger (TC 2.A.31) family. As to expression, expressed in the liver, stomach, kidney, prostate, thyroid and rectum. Expressed in the liver and kidney.

It is found in the apical cell membrane. It localises to the basolateral cell membrane. The catalysed reaction is hydrogencarbonate(in) + chloride(out) = hydrogencarbonate(out) + chloride(in). Its function is as follows. Sodium-independent anion exchanger which mediates the electroneutral exchange of chloride for bicarbonate ions across the cell membrane. Plays an important role in osteoclast differentiation and function. Regulates bone resorption and calpain-dependent actin cytoskeleton organization in osteoclasts via anion exchange-dependent control of pH. Essential for intracellular pH regulation in CD8(+) T-cells upon CD3 stimulation, modulating CD8(+) T-cell responses. The polypeptide is Anion exchange protein 2 (SLC4A2) (Homo sapiens (Human)).